Reading from the N-terminus, the 230-residue chain is Large ribosomal subunit protein uL1 (230 aa).

Belongs to the universal ribosomal protein uL1 family. As to quaternary structure, part of the 50S ribosomal subunit.

In terms of biological role, binds directly to 23S rRNA. The L1 stalk is quite mobile in the ribosome, and is involved in E site tRNA release. Its function is as follows. Protein L1 is also a translational repressor protein, it controls the translation of the L11 operon by binding to its mRNA. The sequence is that of Large ribosomal subunit protein uL1 from Metamycoplasma arthritidis (strain 158L3-1) (Mycoplasma arthritidis).